The sequence spans 231 residues: Caspase-like protein (231 aa).

This sequence belongs to the peptidase C14A family.

The protein is Caspase-like protein of Trichoplusia ni ascovirus 2c (TnAV-2c).